Consider the following 772-residue polypeptide: Endoplasmic reticulum membrane sensor NFE2L1 (772 aa).

The chain crosses the membrane as a helical; Signal-anchor for type II membrane protein span at residues 7–24; the sequence is YLTEGLLQFTILLSLIGV. The disordered stretch occupies residues 108–148; the sequence is DPEGSVSGSQPNSGLALESSSGLQDVTGPDNGVRESETEQG. Polar residues predominate over residues 113–131; sequence VSGSQPNSGLALESSSGLQ. The tract at residues 191-199 is cholesterol recognition/amino acid consensus (CRAC) region; that stretch reads VFDYSHRQK. N-linked (GlcNAc...) asparagine glycans are attached at residues Asn-348 and Asn-360. The CPD stretch occupies residues 379–383; the sequence is SPEVE. Residues Asn-412 and Asn-423 are each glycosylated (N-linked (GlcNAc...) asparagine). 2 disordered regions span residues 470–532 and 582–613; these read EEEF…DSET and SALD…QMSR. Residues 476 to 480 carry the Destruction motif motif; it reads DSGLS. Low complexity predominate over residues 476 to 523; it reads DSGLSLDSSHSPSSLSSSEGSSSSSSSSSSSSSSASSSASSSFSEEGA. Ser-528 is modified (phosphoserine; by CK2). Residues 598–613 are compositionally biased toward basic and acidic residues; it reads GSKEKQADFLDKQMSR. Position 599 is a phosphoserine; by PKA (Ser-599). The region spanning 654–717 is the bZIP domain; it reads LIRDIRRRGK…RQMKQKVQSL (64 aa). Residues 656–675 form a basic motif region; it reads RDIRRRGKNKMAAQNCRKRK. The segment at 682–696 is leucine-zipper; that stretch reads LERDVEDLQRDKARL.

This sequence belongs to the bZIP family. CNC subfamily. Interacts with KEAP1. As to quaternary structure, interacts (via CPD region) with FBXW7; leading to its ubiquitination and degradation. Interacts with SYVN1/HRD1; leading to its ubiquitination and degradation. Interacts (when ubiquitinated) with DDI2; leading to its cleavage. In terms of assembly, interacts (via the bZIP domain) with small MAF protein (MAFF, MAFG or MAFK); required for binding to antioxidant response elements (AREs) on DNA. Interacts (via Destruction motif) with BTRC; leading to its ubiquitination and degradation. Interacts with CEBPB; the heterodimer represses expression of DSPP during odontoblast differentiation. Interacts with MOTS-c, a peptide produced by the mitochondrially encoded 12S rRNA MT-RNR1. In terms of processing, cleaved at Leu-104 by the aspartyl protease DDI2 following retrotranslocation, releasing the protein from the endoplasmic reticulum membrane and forming the transcription factor NRF1 that translocates into the nucleus. Ubiquitination is prerequisite for cleavage by aspartyl protease DDI2. N-glycosylated in normal conditions, when it has a single-pass type II membrane protein topology, with the DNA-binding domain facing the endoplasmic reticulum lumen. Deglycosylated during retrotranslocation to the cytosolic side of the membrane, to have a single-pass type III membrane protein topology with the major part of the protein facing the cytosol. Post-translationally, ubiquitinated by the SCF(FBXW7) complex and SYVN1/HRD1, leading to its degradation by the proteasome. Ubiquitinated during retrotranslocation to the cytosolic side of the membrane: ubiquitination does not lead to degradation and is required for processing by the aspartyl protease DDI2 and subsequent release from the endoplasmic reticulum membrane. In terms of processing, phosphorylation by CK2 at Ser-528 inhibits transcription factor activity, possibly by affecting DNA-binding activity. Phosphorylation at Ser-599 is required for interaction with CEBPB. Ubiquitinated by the SCF(BTRC) complex in the nucleus, leading to its degradation by the proteasome.

The protein resides in the endoplasmic reticulum membrane. It localises to the nucleus. In terms of biological role, endoplasmic reticulum membrane sensor that translocates into the nucleus in response to various stresses to act as a transcription factor. Constitutes a precursor of the transcription factor NRF1. Able to detect various cellular stresses, such as cholesterol excess, oxidative stress or proteasome inhibition. In response to stress, it is released from the endoplasmic reticulum membrane following cleavage by the protease DDI2 and translocates into the nucleus to form the transcription factor NRF1. Acts as a key sensor of cholesterol excess: in excess cholesterol conditions, the endoplasmic reticulum membrane form of the protein directly binds cholesterol via its CRAC motif, preventing cleavage and release of the transcription factor NRF1, thereby allowing expression of genes promoting cholesterol removal, such as CD36. Involved in proteasome homeostasis: in response to proteasome inhibition, it is released from the endoplasmic reticulum membrane, translocates to the nucleus and activates expression of genes encoding proteasome subunits. Functionally, CNC-type bZIP family transcription factor that translocates to the nucleus and regulates expression of target genes in response to various stresses. Heterodimerizes with small-Maf proteins (MAFF, MAFG or MAFK) and binds DNA motifs including the antioxidant response elements (AREs), which regulate expression of genes involved in oxidative stress response. Activates or represses expression of target genes, depending on the context. Plays a key role in cholesterol homeostasis by acting as a sensor of cholesterol excess: in low cholesterol conditions, translocates into the nucleus and represses expression of genes involved in defense against cholesterol excess, such as CD36. In excess cholesterol conditions, the endoplasmic reticulum membrane form of the protein directly binds cholesterol via its CRAC motif, preventing cleavage and release of the transcription factor NRF1, thereby allowing expression of genes promoting cholesterol removal. Critical for redox balance in response to oxidative stress: acts by binding the AREs motifs on promoters and mediating activation of oxidative stress response genes, such as GCLC, GCLM, GSS, MT1 and MT2. Plays an essential role during fetal liver hematopoiesis: probably has a protective function against oxidative stress and is involved in lipid homeostasis in the liver. Involved in proteasome homeostasis: in response to proteasome inhibition, mediates the 'bounce-back' of proteasome subunits by translocating into the nucleus and activating expression of genes encoding proteasome subunits. Also involved in regulating glucose flux. Together with CEBPB; represses expression of DSPP during odontoblast differentiation. In response to ascorbic acid induction, activates expression of SP7/Osterix in osteoblasts. This chain is Endoplasmic reticulum membrane sensor NFE2L1 (NFE2L1), found in Homo sapiens (Human).